The chain runs to 131 residues: Small ribosomal subunit protein uS12c (131 aa).

The protein belongs to the universal ribosomal protein uS12 family. In terms of assembly, part of the 30S ribosomal subunit.

The protein localises to the plastid. The protein resides in the chloroplast. Functionally, with S4 and S5 plays an important role in translational accuracy. Located at the interface of the 30S and 50S subunits. The polypeptide is Small ribosomal subunit protein uS12c (rps12) (Stigeoclonium helveticum (Green alga)).